Here is a 192-residue protein sequence, read N- to C-terminus: Glycerol-3-phosphate acyltransferase (192 aa).

Helical transmembrane passes span 1-21 (MTSA…GVLL), 51-71 (LGAV…VLAV), 78-98 (PTVH…PVWL), 112-132 (VLLV…VAVF), and 155-175 (LTAR…LMLW).

It belongs to the PlsY family. In terms of assembly, probably interacts with PlsX.

Its subcellular location is the cell inner membrane. The enzyme catalyses an acyl phosphate + sn-glycerol 3-phosphate = a 1-acyl-sn-glycero-3-phosphate + phosphate. Its pathway is lipid metabolism; phospholipid metabolism. Its function is as follows. Catalyzes the transfer of an acyl group from acyl-phosphate (acyl-PO(4)) to glycerol-3-phosphate (G3P) to form lysophosphatidic acid (LPA). This enzyme utilizes acyl-phosphate as fatty acyl donor, but not acyl-CoA or acyl-ACP. This Myxococcus xanthus (strain DK1622) protein is Glycerol-3-phosphate acyltransferase.